Here is a 344-residue protein sequence, read N- to C-terminus: tRNA N6-adenosine threonylcarbamoyltransferase (344 aa).

Residues histidine 111 and histidine 115 each coordinate Fe cation. Substrate contacts are provided by residues 134–138 (LVSGG), aspartate 167, glycine 180, and asparagine 273. Aspartate 301 contributes to the Fe cation binding site.

The protein belongs to the KAE1 / TsaD family. Requires Fe(2+) as cofactor.

Its subcellular location is the cytoplasm. It carries out the reaction L-threonylcarbamoyladenylate + adenosine(37) in tRNA = N(6)-L-threonylcarbamoyladenosine(37) in tRNA + AMP + H(+). Its function is as follows. Required for the formation of a threonylcarbamoyl group on adenosine at position 37 (t(6)A37) in tRNAs that read codons beginning with adenine. Is involved in the transfer of the threonylcarbamoyl moiety of threonylcarbamoyl-AMP (TC-AMP) to the N6 group of A37, together with TsaE and TsaB. TsaD likely plays a direct catalytic role in this reaction. This chain is tRNA N6-adenosine threonylcarbamoyltransferase, found in Cupriavidus necator (strain ATCC 17699 / DSM 428 / KCTC 22496 / NCIMB 10442 / H16 / Stanier 337) (Ralstonia eutropha).